Reading from the N-terminus, the 138-residue chain is Small ribosomal subunit protein uS11c (138 aa).

The interval 1-24 (MAKPIPKVGSRRNGRSSARKSARR) is disordered. The segment covering 9–24 (GSRRNGRSSARKSARR) has biased composition (basic residues).

The protein belongs to the universal ribosomal protein uS11 family. In terms of assembly, part of the 30S ribosomal subunit.

It is found in the plastid. Its subcellular location is the chloroplast. The protein is Small ribosomal subunit protein uS11c of Gossypium hirsutum (Upland cotton).